Here is a 201-residue protein sequence, read N- to C-terminus: IMP cyclohydrolase (201 aa).

This sequence belongs to the archaeal IMP cyclohydrolase family.

The catalysed reaction is IMP + H2O = 5-formamido-1-(5-phospho-D-ribosyl)imidazole-4-carboxamide. It functions in the pathway purine metabolism; IMP biosynthesis via de novo pathway; IMP from 5-formamido-1-(5-phospho-D-ribosyl)imidazole-4-carboxamide: step 1/1. Its function is as follows. Catalyzes the cyclization of 5-formylamidoimidazole-4-carboxamide ribonucleotide to IMP. The polypeptide is IMP cyclohydrolase (Methanocella arvoryzae (strain DSM 22066 / NBRC 105507 / MRE50)).